We begin with the raw amino-acid sequence, 171 residues long: dCTP pyrophosphatase (171 aa).

The enzyme catalyses dCTP + H2O = dCMP + diphosphate + H(+). The sequence is that of dCTP pyrophosphatase (56) from Enterobacteria phage T4 (Bacteriophage T4).